A 662-amino-acid chain; its full sequence is Biosynthetic arginine decarboxylase (662 aa).

Lys-126 bears the N6-(pyridoxal phosphate)lysine mark. 308-318 (LNVGGGLGVDY) is a binding site for substrate.

This sequence belongs to the Orn/Lys/Arg decarboxylase class-II family. SpeA subfamily. It depends on Mg(2+) as a cofactor. Pyridoxal 5'-phosphate serves as cofactor.

The enzyme catalyses L-arginine + H(+) = agmatine + CO2. In terms of biological role, catalyzes the biosynthesis of agmatine from arginine. The chain is Biosynthetic arginine decarboxylase from Deinococcus radiodurans (strain ATCC 13939 / DSM 20539 / JCM 16871 / CCUG 27074 / LMG 4051 / NBRC 15346 / NCIMB 9279 / VKM B-1422 / R1).